Here is a 379-residue protein sequence, read N- to C-terminus: Nucleosome assembly protein 1;2 (379 aa).

Positions 26–80 (VNALKNKLQNLAGQHSDVLENLTPPVRKRVEFLREIQNQYDEMEAKFFEERAALE) form a coiled coil. The residue at position 41 (Ser-41) is a Phosphoserine. The Nuclear export signal motif lies at 47-62 (LTPPVRKRVEFLREIQ). A Nuclear localization signal motif is present at residues 222-227 (KKKPKK). The disordered stretch occupies residues 298 to 379 (AVEADDLDIE…GERPPECKQQ (82 aa)). Over residues 299–342 (VEADDLDIEDDDDEIDEDDDEEDEEDDEDDEEEDDEDDDEEEEA) the composition is skewed to acidic residues. Positions 347–360 (KSKKKSSAGHKKAG) are enriched in basic residues. Cys-376 is subject to Cysteine methyl ester. A lipid anchor (S-farnesyl cysteine) is attached at Cys-376. A propeptide spans 377 to 379 (KQQ) (removed in mature form).

The protein belongs to the nucleosome assembly protein (NAP) family. In terms of assembly, can form homomeric and heteromeric protein complexes with NAP1;1, NAP1;3 and NAP1;4. Binds histone H2A. As to expression, ubiquitous.

It is found in the nucleus. It localises to the cytoplasm. May modulate chromatin structure by regulation of nucleosome assembly/disassembly. May function in nucleotide excision repair (NER). Involved in somatic homologous recombination. The protein is Nucleosome assembly protein 1;2 (NAP1;2) of Arabidopsis thaliana (Mouse-ear cress).